We begin with the raw amino-acid sequence, 151 residues long: Cyanate hydratase (151 aa).

Catalysis depends on residues R92, E95, and S118.

The protein belongs to the cyanase family.

It catalyses the reaction cyanate + hydrogencarbonate + 3 H(+) = NH4(+) + 2 CO2. Its function is as follows. Catalyzes the reaction of cyanate with bicarbonate to produce ammonia and carbon dioxide. This is Cyanate hydratase from Coprinopsis cinerea (strain Okayama-7 / 130 / ATCC MYA-4618 / FGSC 9003) (Inky cap fungus).